A 170-amino-acid chain; its full sequence is Cathelicidin antimicrobial peptide (170 aa).

Positions 1-30 are cleaved as a signal peptide; that stretch reads MKTQRDGHSLGRWSLVLLLLGLVMPLAIVA. Residues 31–131 constitute a propeptide, cathelin-like domain (CLD); the sequence is QVLSYKEAVL…DISCDKDNKR (101 aa). Disulfide bonds link C86-C97 and C108-C125. Residues 150-162 form an active core region; sequence FKRIVQRIKDFLR.

Belongs to the cathelicidin family. Monomer, homodimer or homotrimer (in vitro). Oligomerizes as tetra- or hexamer in solution (in vitro). Post-translationally, proteolytically cleaved by proteinase PRTN3 into antibacterial peptide LL-37. Proteolytically cleaved by cathepsin CTSG and neutrophil elastase ELANE. Resistant to proteolytic degradation in solution, and when bound to both zwitterionic (mimicking mammalian membranes) and negatively charged membranes (mimicking bacterial membranes). In terms of processing, after secretion onto the skin surface, the CAMP gene product is processed by a serine protease-dependent mechanism into multiple novel antimicrobial peptides distinct from and shorter than cathelicidin LL-37. These peptides show enhanced antimicrobial action, acquiring the ability to kill skin pathogens such as S.aureus, E.coli and C.albicans. These peptides have lost the ability to stimulate CXCL8/IL8 release from keratinocytes. The peptides act synergistically, killing bacteria at lower concentrations when present together, and maintain activity at increased salt condition.

It localises to the secreted. The protein localises to the vesicle. Antimicrobial protein that is an integral component of the innate immune system. Binds to bacterial lipopolysaccharides (LPS). Acts via neutrophil N-formyl peptide receptors to enhance the release of CXCL2. Postsecretory processing generates multiple cathelicidin antimicrobial peptides with various lengths which act as a topical antimicrobial defense in sweat on skin. The unprocessed precursor form, cathelicidin antimicrobial peptide, inhibits the growth of Gram-negative E.coli and E.aerogenes with efficiencies comparable to that of the mature peptide LL-37 (in vitro). In terms of biological role, antimicrobial peptide that is an integral component of the innate immune system. Binds to bacterial lipopolysaccharides (LPS). Causes membrane permeabilization by forming transmembrane pores (in vitro). Causes lysis of E.coli. Exhibits antimicrobial activity against Gram-negative bacteria such as P.aeruginosa, S.typhimurium, E.aerogenes, E.coli and P.syringae, Gram-positive bacteria such as L.monocytogenes, S.epidermidis, S.pyogenes and S.aureus, as well as vancomycin-resistant enterococci (in vitro). Exhibits antimicrobial activity against methicillin-resistant S.aureus, P.mirabilis, and C.albicans in low-salt media, but not in media containing 100 mM NaCl (in vitro). Forms chiral supramolecular assemblies with quinolone signal (PQS) molecules of P.aeruginosa, which may lead to interference of bacterial quorum signaling and perturbance of bacterial biofilm formation. May form supramolecular fiber-like assemblies on bacterial membranes. Induces cytokine and chemokine producation as well as TNF/TNFA and CSF2/GMCSF production in normal human keratinocytes. Exhibits hemolytic activity against red blood cells. Its function is as follows. Exhibits antimicrobial activity against E.coli and B.megaterium (in vitro). The protein is Cathelicidin antimicrobial peptide of Pan troglodytes (Chimpanzee).